Consider the following 227-residue polypeptide: Cytochrome c oxidase subunit 2 (227 aa).

Over 1 to 14 (MAHPVQLSLQDATS) the chain is Mitochondrial intermembrane. A helical transmembrane segment spans residues 15 to 45 (PIMEELITFHDHAFMAMSLISFLVLYALALT). The Mitochondrial matrix segment spans residues 46 to 59 (LTTKLTNTNITDAQ). A helical membrane pass occupies residues 60–87 (EMETIWTILPAVILILIALPSLRVLYLT). Residues 88-227 (DEVNDPSLTI…IFEMGPVFTL (140 aa)) lie on the Mitochondrial intermembrane side of the membrane. The Cu cation site is built by His161, Cys196, Glu198, Cys200, His204, and Met207. Glu198 serves as a coordination point for Mg(2+).

This sequence belongs to the cytochrome c oxidase subunit 2 family. Component of the cytochrome c oxidase (complex IV, CIV), a multisubunit enzyme composed of 14 subunits. The complex is composed of a catalytic core of 3 subunits MT-CO1, MT-CO2 and MT-CO3, encoded in the mitochondrial DNA, and 11 supernumerary subunits COX4I, COX5A, COX5B, COX6A, COX6B, COX6C, COX7A, COX7B, COX7C, COX8 and NDUFA4, which are encoded in the nuclear genome. The complex exists as a monomer or a dimer and forms supercomplexes (SCs) in the inner mitochondrial membrane with NADH-ubiquinone oxidoreductase (complex I, CI) and ubiquinol-cytochrome c oxidoreductase (cytochrome b-c1 complex, complex III, CIII), resulting in different assemblies (supercomplex SCI(1)III(2)IV(1) and megacomplex MCI(2)III(2)IV(2)). Found in a complex with TMEM177, COA6, COX18, COX20, SCO1 and SCO2. Interacts with TMEM177 in a COX20-dependent manner. Interacts with COX20. Interacts with COX16. It depends on Cu cation as a cofactor.

It is found in the mitochondrion inner membrane. It carries out the reaction 4 Fe(II)-[cytochrome c] + O2 + 8 H(+)(in) = 4 Fe(III)-[cytochrome c] + 2 H2O + 4 H(+)(out). Its function is as follows. Component of the cytochrome c oxidase, the last enzyme in the mitochondrial electron transport chain which drives oxidative phosphorylation. The respiratory chain contains 3 multisubunit complexes succinate dehydrogenase (complex II, CII), ubiquinol-cytochrome c oxidoreductase (cytochrome b-c1 complex, complex III, CIII) and cytochrome c oxidase (complex IV, CIV), that cooperate to transfer electrons derived from NADH and succinate to molecular oxygen, creating an electrochemical gradient over the inner membrane that drives transmembrane transport and the ATP synthase. Cytochrome c oxidase is the component of the respiratory chain that catalyzes the reduction of oxygen to water. Electrons originating from reduced cytochrome c in the intermembrane space (IMS) are transferred via the dinuclear copper A center (CU(A)) of subunit 2 and heme A of subunit 1 to the active site in subunit 1, a binuclear center (BNC) formed by heme A3 and copper B (CU(B)). The BNC reduces molecular oxygen to 2 water molecules using 4 electrons from cytochrome c in the IMS and 4 protons from the mitochondrial matrix. This chain is Cytochrome c oxidase subunit 2 (MT-CO2), found in Macaca fascicularis (Crab-eating macaque).